Reading from the N-terminus, the 263-residue chain is Small ribosomal subunit protein eS4, X isoform (263 aa).

One can recognise an S4 RNA-binding domain in the interval 42-104; it reads LPLIIFLRNR…TGEHFRLVYD (63 aa). Lys-230 participates in a covalent cross-link: Glycyl lysine isopeptide (Lys-Gly) (interchain with G-Cter in SUMO2). N6-acetyllysine is present on Lys-233.

The protein belongs to the eukaryotic ribosomal protein eS4 family. In terms of assembly, component of the small ribosomal subunit. Part of the small subunit (SSU) processome, composed of more than 70 proteins and the RNA chaperone small nucleolar RNA (snoRNA) U3. Identified in a IGF2BP1-dependent mRNP granule complex containing untranslated mRNAs.

It is found in the cytoplasm. The protein localises to the nucleus. It localises to the nucleolus. In terms of biological role, component of the small ribosomal subunit. The ribosome is a large ribonucleoprotein complex responsible for the synthesis of proteins in the cell. Part of the small subunit (SSU) processome, first precursor of the small eukaryotic ribosomal subunit. During the assembly of the SSU processome in the nucleolus, many ribosome biogenesis factors, an RNA chaperone and ribosomal proteins associate with the nascent pre-rRNA and work in concert to generate RNA folding, modifications, rearrangements and cleavage as well as targeted degradation of pre-ribosomal RNA by the RNA exosome. The polypeptide is Small ribosomal subunit protein eS4, X isoform (RPS4X) (Monodelphis domestica (Gray short-tailed opossum)).